A 360-amino-acid polypeptide reads, in one-letter code: tRNA N6-adenosine threonylcarbamoyltransferase (360 aa).

2 residues coordinate Fe cation: H115 and H119. Residues L137–G141, D170, G183, and N283 contribute to the substrate site. Position 311 (D311) interacts with Fe cation.

Belongs to the KAE1 / TsaD family. It depends on Fe(2+) as a cofactor.

The protein resides in the cytoplasm. The catalysed reaction is L-threonylcarbamoyladenylate + adenosine(37) in tRNA = N(6)-L-threonylcarbamoyladenosine(37) in tRNA + AMP + H(+). Required for the formation of a threonylcarbamoyl group on adenosine at position 37 (t(6)A37) in tRNAs that read codons beginning with adenine. Is involved in the transfer of the threonylcarbamoyl moiety of threonylcarbamoyl-AMP (TC-AMP) to the N6 group of A37, together with TsaE and TsaB. TsaD likely plays a direct catalytic role in this reaction. The protein is tRNA N6-adenosine threonylcarbamoyltransferase of Rhizobium meliloti (strain 1021) (Ensifer meliloti).